Reading from the N-terminus, the 1600-residue chain is THO complex subunit 2 (1600 aa).

Residues methionine 1–asparagine 163 are anchor domain; interaction with THOC5 and THOC7. The segment at leucine 164–serine 534 is bow domain; interaction with THOC1 dock domain and THOC3. Residues asparagine 293–lysine 339 adopt a coiled-coil conformation. Positions glutamate 321–proline 341 are disordered. Residues histidine 535 to methionine 686 form an MIF4G domain; interaction with THOC3 and DDX39B region. The stern domain stretch occupies residues alanine 687–lysine 1174. The stretch at histidine 896 to leucine 965 forms a coiled coil. A Nuclear localization signal motif is present at residues lysine 923–lysine 928. Residues serine 1175 to asparagine 1597 are charged domain. A disordered region spans residues asparagine 1184–leucine 1600. A compositionally biased stretch (low complexity) spans proline 1208–serine 1217. Basic and acidic residues predominate over residues lysine 1218 to serine 1234. Serine 1222 carries the post-translational modification Phosphoserine. The segment covering glycine 1251–asparagine 1263 has biased composition (low complexity). 3 stretches are compositionally biased toward basic and acidic residues: residues alanine 1265–threonine 1285, isoleucine 1294–lysine 1343, and serine 1353–glutamate 1383. Threonine 1385 carries the phosphothreonine modification. Phosphoserine is present on residues serine 1390, serine 1393, and serine 1417. Over residues proline 1416–lysine 1425 the composition is skewed to polar residues. The residue at position 1443 (threonine 1443) is a Phosphothreonine. Positions lysine 1449–asparagine 1504 are enriched in basic and acidic residues. Phosphoserine is present on residues serine 1450, serine 1486, and serine 1516. Residues arginine 1464–glutamate 1491 adopt a coiled-coil conformation. A compositionally biased stretch (basic and acidic residues) spans asparagine 1524–glutamine 1585.

It belongs to the THOC2 family. Component of the THO subcomplex, which is composed of THOC1, THOC2, THOC3, THOC5, THOC6 and THOC7. The THO subcomplex interacts with DDX39B to form the THO-DDX39B complex which multimerizes into a 28-subunit tetrameric assembly. Component of the transcription/export (TREX) complex at least composed of ALYREF/THOC4, DDX39B, SARNP/CIP29, CHTOP and the THO subcomplex; in the complex interacts with THOC1, THOC3, THOC5, THOC7 and DDX39B. TREX seems to have a dynamic structure involving ATP-dependent remodeling. Interacts with POLDIP3 and ZC3H11A.

The protein localises to the nucleus. It is found in the nucleus speckle. It localises to the cytoplasm. Its function is as follows. Component of the THO subcomplex of the TREX complex which is thought to couple mRNA transcription, processing and nuclear export, and which specifically associates with spliced mRNA and not with unspliced pre-mRNA. Required for efficient export of polyadenylated RNA and spliced mRNA. The THOC1-THOC2-THOC3 core complex alone is sufficient to bind export factor NXF1-NXT1 and promote ATPase activity of DDX39B; in the complex THOC2 is the only component that directly interacts with DDX39B. TREX is recruited to spliced mRNAs by a transcription-independent mechanism, binds to mRNA upstream of the exon-junction complex (EJC) and is recruited in a splicing- and cap-dependent manner to a region near the 5' end of the mRNA where it functions in mRNA export to the cytoplasm via the TAP/NXF1 pathway. Required for NXF1 localization to the nuclear rim. THOC2 (and probably the THO complex) is involved in releasing mRNA from nuclear speckle domains. Plays a role for proper neuronal development. The protein is THO complex subunit 2 (THOC2) of Plecturocebus moloch (Dusky titi monkey).